Consider the following 728-residue polypeptide: Catalase-peroxidase 1 (728 aa).

The signal sequence occupies residues Met-1–Ala-22. The tryptophyl-tyrosyl-methioninium (Trp-Tyr) (with M-251) cross-link spans Trp-97 to Tyr-225. Residue His-98 is the Proton acceptor of the active site. The segment at residues Tyr-225–Met-251 is a cross-link (tryptophyl-tyrosyl-methioninium (Tyr-Met) (with W-97)). His-266 serves as a coordination point for heme b.

This sequence belongs to the peroxidase family. Peroxidase/catalase subfamily. Homodimer or homotetramer. Heme b is required as a cofactor. Post-translationally, formation of the three residue Trp-Tyr-Met cross-link is important for the catalase, but not the peroxidase activity of the enzyme.

The enzyme catalyses H2O2 + AH2 = A + 2 H2O. It catalyses the reaction 2 H2O2 = O2 + 2 H2O. Functionally, bifunctional enzyme with both catalase and broad-spectrum peroxidase activity. This chain is Catalase-peroxidase 1, found in Shewanella sp. (strain MR-7).